Reading from the N-terminus, the 161-residue chain is uncharacterized protein (161 aa).

The chain crosses the membrane as a helical span at residues 30 to 50 (GVILFRLLGVILFRLLGVILF).

It localises to the membrane. This is an uncharacterized protein from Homo sapiens (Human).